The chain runs to 332 residues: N-arachidonyl glycine receptor (332 aa).

Topologically, residues 1–26 (MTTPHSQAQPGLPIDPHPDEYKVAAL) are extracellular. A helical transmembrane segment spans residues 27–47 (VFYSCIFIIGLFVNVTALWVF). The Cytoplasmic segment spans residues 48-56 (SCTTKKRTT). A helical transmembrane segment spans residues 57–77 (VTVYMMNVALLDLVFIMSLPF). Residues 78 to 95 (RMLYYAKGEWPFGEYFCR) are Extracellular-facing. Cysteines 94 and 173 form a disulfide. A helical transmembrane segment spans residues 96–116 (ILGALTVFYPSIALWLLAFIS). Over 117–138 (ADRYMAIVQPKYAKELKNTCKA) the chain is Cytoplasmic. A helical transmembrane segment spans residues 139-159 (VMACVGVWIMTLTTTIPLLLL). Over 160-192 (YEDPDTASSTPPTCLKISDIIYLKAINALNFTR) the chain is Extracellular. Residue Asn189 is glycosylated (N-linked (GlcNAc...) asparagine). Residues 193 to 213 (LIFFFLIPLFIMIGCYLVIIH) traverse the membrane as a helical segment. Topologically, residues 214–233 (SLLHGKTSKLKPKVKEKSIR) are cytoplasmic. A helical membrane pass occupies residues 234-254 (IIITLMVQVLVCFMPFHICFA). Topologically, residues 255 to 269 (FLMLGGDENSYNPWG) are extracellular. Residues 270–290 (AFTTFLMNLSTCLDVILYYIV) traverse the membrane as a helical segment. At 291–332 (SKQFQARVISVMLYRNYLRSVRRKSFRSGSLRSLSNINSEML) the chain is on the cytoplasmic side. At Ser323 the chain carries Phosphoserine.

It belongs to the G-protein coupled receptor 1 family.

It is found in the cell membrane. The protein localises to the cytoplasmic vesicle membrane. Functionally, g protein-coupled receptor (GPCR) that plays a role in diverse physiological processes particularly within the immune and nervous systems. Becomes active when triggered by various endogenous ligands including endocannabinoid N-arachidonyl glycine (NAGly), delta-9-tetrahydrocannabinol or resolvin D2/RvD2 derived from the omega-3 fatty acid docosahexaenoic acid (DHA). Upon RvD2 binding, facilitates the resolution of inflammation, aiding in tissue repair and homeostasis. Mechanistically, RvD2 ligation initiates Galphas protein coupling, activation of cAMP-PKA signaling pathway and phosphorylation of STAT3, leading to RvD2-stimulated macrophage phagocytosis. Mediates NAGly-induced process of reorganization of actin filaments and induction of acrosomal exocytosis. Activation by N-arachidonoyl glycine (NAGly) can also induce apoptosis in macrophages. Plays a role in homeostasis of CD8+ subsets of intraepithelial lymphocytes (IELs) (CD8alphaalpha and CD8alphabeta IELs) in small intestine by supporting preferential migration of CD8alphaalpha T-cells to intraepithelial compartment over lamina propria compartment, and by mediating their reconstitution into small intestine after bone marrow transplant. Participates also in hypotensive responses, mediating reduction in intraocular and blood pressure. This chain is N-arachidonyl glycine receptor (GPR18), found in Bos taurus (Bovine).